The chain runs to 363 residues: Protein RecA (363 aa).

Residue Gly79–Thr86 participates in ATP binding.

This sequence belongs to the RecA family.

It is found in the cytoplasm. Its function is as follows. Can catalyze the hydrolysis of ATP in the presence of single-stranded DNA, the ATP-dependent uptake of single-stranded DNA by duplex DNA, and the ATP-dependent hybridization of homologous single-stranded DNAs. It interacts with LexA causing its activation and leading to its autocatalytic cleavage. This is Protein RecA from Borrelia turicatae (strain 91E135).